Here is a 307-residue protein sequence, read N- to C-terminus: Transcription factor DIVARICATA (307 aa).

Positions 21 to 74 constitute an SANT domain; it reads RSTTRWTAAENKAFENALAVFDENTPNRWERVAERVPGKTVGDVMRQYKELEDD. Positions 109 to 133 are disordered; the sequence is QSYGTGGRKSSSGRPSEQERKKGVP. Over residues 124–133 the composition is skewed to basic and acidic residues; sequence SEQERKKGVP. The 57-residue stretch at 126 to 182 folds into the HTH myb-type domain; sequence QERKKGVPWTEEEHKLFLMGLKKYGKGDWRNISRNFVITRTPTQVASHAQKYFIRQL. The H-T-H motif DNA-binding region spans 154–178; that stretch reads WRNISRNFVITRTPTQVASHAQKYF. Polar residues-rich tracts occupy residues 196–206 and 222–231; these read ITTVNLSDNQT and MAQQQTSSTS. The interval 196–231 is disordered; that stretch reads ITTVNLSDNQTPSPDNKKPPSSPDHSMAQQQTSSTS.

Its subcellular location is the nucleus. Functionally, involved in the dorsovental asymmetry of flowers. Promotes ventral identity. This Antirrhinum majus (Garden snapdragon) protein is Transcription factor DIVARICATA (DIVARICATA).